Reading from the N-terminus, the 493-residue chain is Angiopoietin-related protein 2 (493 aa).

An N-terminal signal peptide occupies residues 1 to 22 (MRPLCVTCWWLGLLAAMGAVAG). Coiled-coil stretches lie at residues 76–115 (PEVL…VDGG) and 152–206 (ALEL…HCQR). N-linked (GlcNAc...) asparagine glycans are attached at residues Asn-164 and Asn-192. The region spanning 269 to 489 (DKPSGPWRDC…KVVMMIRPNP (221 aa)) is the Fibrinogen C-terminal domain. 2 disulfide bridges follow: Cys-278-Cys-307 and Cys-430-Cys-443.

Post-translationally, N-glycosylated. Widely expressed in heart, small intestine, spleen and stomach. Also found in lower levels in colon, ovary, adrenal gland, skeletal muscle and in prostate.

Its subcellular location is the secreted. Its function is as follows. Induces sprouting in endothelial cells through an autocrine and paracrine action. The chain is Angiopoietin-related protein 2 (ANGPTL2) from Homo sapiens (Human).